Consider the following 467-residue polypeptide: MENLKKRFDVLQDLLMNIYEQGSDTLESQIEHWQALRREAVLLYYARQNGVLRLGYLPVPPLATSEAKAKQAISMVLQLQSLQQSPYGTEKWTLVDTSIETFKNTPENHFKKGPINVEVIYDGDPDNANLYTMWKYVYYMDDNDQWQKTESGANHTGIYYLIGEFKHYYVLFADDANRYSKSGQWEVRINKETVFAPVTSSTPPDSPGGSRELPGSTANSKASSPTQQPQQACSDETTKRKRYGRRESSPTDSRCRRRSSSRQKKQGRRARSRTRSRCSSTQTRSRSTSRRSRSTSRGNRRCRGDTPRGQRGVSTSSRGRGRGSRRSSSSSSPTPRTKASQRGCDTRSVRDSGISPGDVGRKLQTVSGRNSGRLGRLLEEALDPPVILLRGGANTLKCFRNRAKLRYRGHYKAFSTSWSWVAADGTERLGRSRLLVSFTSFKQRSGFLDLVRFPKGVDWSLGSFDKL.

The segment at 1–201 (MENLKKRFDV…ETVFAPVTSS (201 aa)) is transactivation domain. Residues 196-367 (APVTSSTPPD…DVGRKLQTVS (172 aa)) are disordered. Residues 197-210 (PVTSSTPPDSPGGS) show a composition bias toward low complexity. Residues 216–235 (STANSKASSPTQQPQQACSD) show a composition bias toward polar residues. The span at 255–276 (CRRRSSSRQKKQGRRARSRTRS) shows a compositional bias: basic residues. The segment covering 277–286 (RCSSTQTRSR) has biased composition (low complexity). A compositionally biased stretch (basic residues) spans 287–301 (STSRRSRSTSRGNRR). Low complexity predominate over residues 309–318 (GQRGVSTSSR). Positions 383–467 (DPPVILLRGG…DWSLGSFDKL (85 aa)) are DNA-binding domain.

This sequence belongs to the papillomaviridae E2 protein family. As to quaternary structure, binds DNA as homodimer. Interacts with protein E1; this interaction greatly increases E1 DNA-binding activity. Interacts with protein L1; this interaction enhances E2-dependent replication and transcription activation. Interacts with protein L2; this interaction inhibits E2 transcriptional activity but not DNA replication function E2. Interacts with protein E7; this interaction inhibits E7 oncogenic activity. Interacts with host TAF1; this interaction modulates E2-dependent transcriptional regulation. Interacts with host BRD4; this interaction mediates E2 transcriptional activation function. Additionally, the interaction with host BRD4 on mitotic chromosomes mediates tethering of the viral genome. Interacts with host TOPBP1; this interaction is required for optimal viral DNA replication. Phosphorylated.

It localises to the host nucleus. Functionally, plays a role in the initiation of viral DNA replication. A dimer of E2 interacts with a dimer of E1 in order to improve specificity of E1 DNA binding activity. Once the complex recognizes and binds DNA at specific sites, the E2 dimer is removed from DNA. E2 also regulates viral transcription through binding to the E2RE response element (5'-ACCNNNNNNGGT-3') present in multiple copies in the regulatory regions of the viral genome. Activates or represses transcription depending on E2RE's position with regards to proximal promoter elements including the TATA-box. Repression occurs by sterically hindering the assembly of the transcription initiation complex. In Human papillomavirus 24, this protein is Regulatory protein E2.